We begin with the raw amino-acid sequence, 390 residues long: Carbamoyl phosphate synthase small chain (390 aa).

Residues 1–198 form a CPSase region; that stretch reads MTSTPTPTPT…LGEGYAVGPE (198 aa). Residues Ser-53, Gly-250, and Gly-252 each coordinate L-glutamine. One can recognise a Glutamine amidotransferase type-1 domain in the interval 202-390; it reads RVVVLDYGVK…VGELKGRVEA (189 aa). The active-site Nucleophile is the Cys-279. L-glutamine contacts are provided by Leu-280, Gln-283, Asn-321, Gly-323, and Phe-324. Active-site residues include His-363 and Glu-365.

The protein belongs to the CarA family. As to quaternary structure, composed of two chains; the small (or glutamine) chain promotes the hydrolysis of glutamine to ammonia, which is used by the large (or ammonia) chain to synthesize carbamoyl phosphate. Tetramer of heterodimers (alpha,beta)4.

It carries out the reaction hydrogencarbonate + L-glutamine + 2 ATP + H2O = carbamoyl phosphate + L-glutamate + 2 ADP + phosphate + 2 H(+). The enzyme catalyses L-glutamine + H2O = L-glutamate + NH4(+). It participates in amino-acid biosynthesis; L-arginine biosynthesis; carbamoyl phosphate from bicarbonate: step 1/1. The protein operates within pyrimidine metabolism; UMP biosynthesis via de novo pathway; (S)-dihydroorotate from bicarbonate: step 1/3. Its function is as follows. Small subunit of the glutamine-dependent carbamoyl phosphate synthetase (CPSase). CPSase catalyzes the formation of carbamoyl phosphate from the ammonia moiety of glutamine, carbonate, and phosphate donated by ATP, constituting the first step of 2 biosynthetic pathways, one leading to arginine and/or urea and the other to pyrimidine nucleotides. The small subunit (glutamine amidotransferase) binds and cleaves glutamine to supply the large subunit with the substrate ammonia. This Maricaulis maris (strain MCS10) (Caulobacter maris) protein is Carbamoyl phosphate synthase small chain.